Here is a 359-residue protein sequence, read N- to C-terminus: Probable NAD(P)H nitroreductase PigM (359 aa).

It belongs to the nitroreductase family. FMN is required as a cofactor.

It functions in the pathway antibiotic biosynthesis; prodigiosin biosynthesis. In terms of biological role, involved in the biosynthesis of 4-methoxy-2,2'-bipyrrole-5-carbaldehyde (MBC), one of the terminal products involved in the biosynthesis of the red antibiotic prodigiosin (Pig). Catalyzes the oxidation of the hydroxy group of 4-hydroxy-2,2'-bipyrrole-5-methanol (HBM) to yield 4-methoxy-2,2'-bipyrrole-5-carbaldehyde (MBC). The polypeptide is Probable NAD(P)H nitroreductase PigM (Serratia sp. (strain ATCC 39006) (Prodigiosinella confusarubida)).